The primary structure comprises 100 residues: Small ribosomal subunit protein uS14c (100 aa).

It belongs to the universal ribosomal protein uS14 family. In terms of assembly, part of the 30S ribosomal subunit.

It localises to the plastid. It is found in the chloroplast. Its function is as follows. Binds 16S rRNA, required for the assembly of 30S particles. The sequence is that of Small ribosomal subunit protein uS14c from Buxus microphylla (Littleleaf boxwood).